We begin with the raw amino-acid sequence, 137 residues long: Large ribosomal subunit protein uL16 (137 aa).

It belongs to the universal ribosomal protein uL16 family. In terms of assembly, part of the 50S ribosomal subunit.

Binds 23S rRNA and is also seen to make contacts with the A and possibly P site tRNAs. This chain is Large ribosomal subunit protein uL16, found in Chlamydia abortus (strain DSM 27085 / S26/3) (Chlamydophila abortus).